A 789-amino-acid chain; its full sequence is Disintegrin and metalloproteinase domain-containing protein 1 (789 aa).

The first 68 residues, 1–68, serve as a signal peptide directing secretion; sequence MSVAASASRS…LLIFLPSTLC (68 aa). A Peptidase M12B domain is found at 238 to 432; the sequence is KYVEMFVVVN…HRGACLLDRP (195 aa). A glycan (N-linked (GlcNAc...) asparagine) is linked at Asn259. Intrachain disulfides connect Cys348–Cys427, Cys388–Cys411, Cys390–Cys396, and Cys497–Cys517. His373 is a Zn(2+) binding site. Glu374 is an active-site residue. His377 and His383 together coordinate Zn(2+). An N-linked (GlcNAc...) asparagine glycan is attached at Asn410. The Disintegrin domain maps to 441–525; sequence DAHCGNGVVE…ECPANSYMQD (85 aa). Residue Asn633 is glycosylated (N-linked (GlcNAc...) asparagine). Positions 666 to 700 constitute an EGF-like domain; that stretch reads LQYDCHPQEMCHGNGVCNNFKHCHCDAGFSPPDCS. 3 disulfides stabilise this stretch: Cys670–Cys682, Cys676–Cys688, and Cys690–Cys699. N-linked (GlcNAc...) asparagine glycosylation is present at Asn720. A helical transmembrane segment spans residues 743–763; the sequence is VVVLVVPIFLIVLLCCLMLIA. Residues 764-789 are Cytoplasmic-facing; the sequence is YLWSEVQEAVSPGSSSTTSSSESESD.

Heterodimer with ADAM2/fertilin subunit beta.

It is found in the membrane. Functionally, may be involved in sperm-egg fusion. The protein is Disintegrin and metalloproteinase domain-containing protein 1 (Adam1) of Rattus norvegicus (Rat).